Consider the following 247-residue polypeptide: Translation initiation factor IF-3 (247 aa).

2 disordered regions span residues 1 to 20 (MIRE…TNRR) and 188 to 247 (LVRQ…PTAS). The needed for vegetative and developmental functions, but not for viability stretch occupies residues 182-247 (AQKARELVRQ…AAEAQSPTAS (66 aa)). Low complexity predominate over residues 207 to 217 (AGKSAAGASSG). Residues 218-232 (AEEKAEETAEEKKEA) are compositionally biased toward basic and acidic residues. Residues 233 to 247 (QAAPAAAEAQSPTAS) show a composition bias toward low complexity.

This sequence belongs to the IF-3 family. In terms of assembly, monomer.

It localises to the cytoplasm. In terms of biological role, IF-3 binds to the 30S ribosomal subunit and shifts the equilibrium between 70S ribosomes and their 50S and 30S subunits in favor of the free subunits, thus enhancing the availability of 30S subunits on which protein synthesis initiation begins. The sequence is that of Translation initiation factor IF-3 from Myxococcus xanthus.